A 149-amino-acid chain; its full sequence is Lipoprotein signal peptidase (149 aa).

Helical transmembrane passes span 24–44 (SHIA…LTNL), 57–77 (KMWF…YLLW), and 81–101 (GKWL…GNFI). Active-site residues include D111 and D127. Residues 122–142 (IFNFADSCLTVGVIFILIGVL) traverse the membrane as a helical segment.

The protein belongs to the peptidase A8 family.

Its subcellular location is the cell membrane. The enzyme catalyses Release of signal peptides from bacterial membrane prolipoproteins. Hydrolyzes -Xaa-Yaa-Zaa-|-(S,diacylglyceryl)Cys-, in which Xaa is hydrophobic (preferably Leu), and Yaa (Ala or Ser) and Zaa (Gly or Ala) have small, neutral side chains.. Its pathway is protein modification; lipoprotein biosynthesis (signal peptide cleavage). Functionally, this protein specifically catalyzes the removal of signal peptides from prolipoproteins. This Lactiplantibacillus plantarum (strain ATCC BAA-793 / NCIMB 8826 / WCFS1) (Lactobacillus plantarum) protein is Lipoprotein signal peptidase.